The chain runs to 73 residues: Translation initiation factor IF-1 (73 aa).

The region spanning 1 to 72 is the S1-like domain; the sequence is MAKEEAIEKD…SKGRIVYRYK (72 aa).

Belongs to the IF-1 family. Component of the 30S ribosomal translation pre-initiation complex which assembles on the 30S ribosome in the order IF-2 and IF-3, IF-1 and N-formylmethionyl-tRNA(fMet); mRNA recruitment can occur at any time during PIC assembly.

It localises to the cytoplasm. Functionally, one of the essential components for the initiation of protein synthesis. Stabilizes the binding of IF-2 and IF-3 on the 30S subunit to which N-formylmethionyl-tRNA(fMet) subsequently binds. Helps modulate mRNA selection, yielding the 30S pre-initiation complex (PIC). Upon addition of the 50S ribosomal subunit IF-1, IF-2 and IF-3 are released leaving the mature 70S translation initiation complex. The chain is Translation initiation factor IF-1 from Salinibacter ruber (strain DSM 13855 / M31).